Reading from the N-terminus, the 273-residue chain is Pyridoxal phosphate homeostasis protein (273 aa).

Position 6 is a phosphoserine (Ser-6). N6-(pyridoxal phosphate)lysine is present on Lys-47. Tyr-69 is subject to Phosphotyrosine. Lys-125 carries the post-translational modification N6-succinyllysine. Phosphoserine occurs at positions 226 and 244. The span at 251-260 (DYSKKTDKPA) shows a compositional bias: basic and acidic residues. Residues 251-273 (DYSKKTDKPAAELQAPEEVAQAH) form a disordered region.

It belongs to the pyridoxal phosphate-binding protein YggS/PROSC family.

Its function is as follows. Pyridoxal 5'-phosphate (PLP)-binding protein, which may be involved in intracellular homeostatic regulation of pyridoxal 5'-phosphate (PLP), the active form of vitamin B6. This chain is Pyridoxal phosphate homeostasis protein, found in Bos taurus (Bovine).